Reading from the N-terminus, the 327-residue chain is Putative HTH-type transcriptional regulatory protein Mevan_1514 (327 aa).

Residues 128 to 189 (LKETREKLNI…IKGINITDYF (62 aa)) enclose the HTH cro/C1-type domain. Positions 139 to 158 (VGELAEFSRVSRKTIYKYEQ) form a DNA-binding region, H-T-H motif.

The polypeptide is Putative HTH-type transcriptional regulatory protein Mevan_1514 (Methanococcus vannielii (strain ATCC 35089 / DSM 1224 / JCM 13029 / OCM 148 / SB)).